Consider the following 491-residue polypeptide: Cytosolic Fe-S cluster assembly factor NAR1 (491 aa).

8 residues coordinate [4Fe-4S] cluster: Cys20, Cys65, Cys68, Cys71, Cys177, Cys232, Cys414, and Cys418.

The protein belongs to the NARF family.

In terms of biological role, component of the cytosolic Fe/S protein assembly machinery. Required for maturation of extramitochondrial Fe/S proteins. May play a role in the transfer of pre-assembled Fe/S clusters to target apoproteins. The sequence is that of Cytosolic Fe-S cluster assembly factor NAR1 (NAR1) from Yarrowia lipolytica (strain CLIB 122 / E 150) (Yeast).